We begin with the raw amino-acid sequence, 687 residues long: Guanine-nucleotide exchange factor YEL1 (687 aa).

Polar residues predominate over residues 14–27 (YGVSQKGYNDNFSE). 2 disordered regions span residues 14–35 (YGVS…LHGS) and 63–97 (AAND…TDQN). An SEC7 domain is found at 57 to 264 (ILQNKEAAND…SEYYKTLNET (208 aa)). Over residues 73 to 83 (TTDTATAGTGT) the composition is skewed to low complexity. T290 is subject to Phosphothreonine. Phosphoserine is present on residues S293 and S299. In terms of domain architecture, PH spans 412–551 (ASRRTSLSYL…DCINFWAGRI (140 aa)).

Belongs to the YEL1 family.

The protein resides in the cytoplasm. Its subcellular location is the cell membrane. It is found in the bud neck. It localises to the bud tip. Functionally, guanine nucleotide exchange factor for ARF3 required for localization of ARF3 to the bud neck and tip and involved in actin patch polarization. The chain is Guanine-nucleotide exchange factor YEL1 (YEL1) from Saccharomyces cerevisiae (strain RM11-1a) (Baker's yeast).